We begin with the raw amino-acid sequence, 331 residues long: Probable cytosolic iron-sulfur protein assembly protein Ciao1 (331 aa).

WD repeat units lie at residues 12 to 51 (GHKG…WTTK), 57 to 96 (GHKR…ATLE), 97 to 136 (GHEN…EFEC), 142 to 181 (AHSQ…SDWD), 188 to 227 (SHTS…NEAG), 246 to 285 (LHTR…KRDA), and 297 to 331 (AHEQ…KLQE).

This sequence belongs to the WD repeat CIA1 family.

In terms of biological role, essential component of the cytosolic iron-sulfur (Fe/S) protein assembly machinery. Required for the maturation of extramitochondrial Fe/S proteins. The chain is Probable cytosolic iron-sulfur protein assembly protein Ciao1 from Drosophila mojavensis (Fruit fly).